The following is a 547-amino-acid chain: Alpha-1,3-mannosyl-glycoprotein 4-beta-N-acetylglucosaminyltransferase B (547 aa).

The Cytoplasmic segment spans residues 1–7 (MRLRNGT). A helical; Signal-anchor for type II membrane protein membrane pass occupies residues 8 to 28 (FLTVLLFGLCGLISLSWYTAF). Over 29 to 547 (SNSKGNVVDI…LSEIFIKKAE (519 aa)) the chain is Lumenal. The stretch at 36-83 (VDIYQREFLALRDRLHSAEQENLKRSKELNLVLDEIKRAIAEKQALRD) forms a coiled coil. Asparagine 85, asparagine 101, and asparagine 464 each carry an N-linked (GlcNAc...) asparagine glycan.

This sequence belongs to the glycosyltransferase 54 family. A divalent metal cation serves as cofactor. Post-translationally, N-glycosylated.

The protein resides in the golgi apparatus membrane. The catalysed reaction is N(4)-{beta-D-GlcNAc-(1-&gt;2)-alpha-D-Man-(1-&gt;3)-[beta-D-GlcNAc-(1-&gt;2)-alpha-D-Man-(1-&gt;6)]-beta-D-Man-(1-&gt;4)-beta-D-GlcNAc-(1-&gt;4)-beta-D-GlcNAc}-L-asparaginyl-[protein] + UDP-N-acetyl-alpha-D-glucosamine = N(4)-{beta-D-GlcNAc-(1-&gt;2)-[beta-D-GlcNAc-(1-&gt;4)]-alpha-D-Man-(1-&gt;3)-[beta-D-GlcNAc-(1-&gt;2)-alpha-D-Man-(1-&gt;6)]-beta-D-Man-(1-&gt;4)-beta-D-GlcNAc-(1-&gt;4)-beta-D-GlcNAc}-L-asparaginyl-[protein] + UDP + H(+). It catalyses the reaction an N(4)-{beta-D-GlcNAc-(1-&gt;2)-alpha-D-Man-(1-&gt;3)-[alpha-D-Man-(1-&gt;6)]-beta-D-Man-(1-&gt;4)-beta-D-GlcNAc-(1-&gt;4)-beta-D-GlcNAc}-L-asparaginyl-[protein] + UDP-N-acetyl-alpha-D-glucosamine = an N(4)-{beta-D-GlcNAc-(1-&gt;2)-[beta-D-GlcNAc-(1-&gt;4)]-alpha-D-Man-(1-&gt;3)-[alpha-D-Man-(1-&gt;6)]-beta-D-Man-(1-&gt;4)-beta-D-GlcNAc-(1-&gt;4)-beta-D-GlcNAc}-L-asparaginyl-[protein] + UDP + H(+). It carries out the reaction an N(4)-{beta-D-GlcNAc-(1-&gt;2)-alpha-D-Man-(1-&gt;3)-[beta-D-GlcNAc-(1-&gt;2)-[beta-D-GlcNAc-(1-&gt;6)]-alpha-D-Man-(1-&gt;6)]-beta-D-Man-(1-&gt;4)-beta-D-GlcNAc-(1-&gt;4)-beta-D-GlcNAc}-L-asparaginyl-[protein] + UDP-N-acetyl-alpha-D-glucosamine = an N(4)-{beta-D-GlcNAc-(1-&gt;2)-[beta-D-GlcNAc-(1-&gt;4)]-alpha-D-Man-(1-&gt;3)-[beta-D-GlcNAc-(1-&gt;2)-[beta-D-GlcNAc-(1-&gt;6)]-alpha-D-Man-(1-&gt;6)]-beta-D-Man-(1-&gt;4)-beta-D-GlcNAc-(1-&gt;4)-beta-D-GlcNAc}-L-asparaginyl-[protein] + UDP + H(+). The enzyme catalyses an N(4)-{beta-D-GlcNAc-(1-&gt;2)-alpha-D-Man-(1-&gt;3)-[beta-D-GlcNAc-(1-&gt;2)-alpha-D-Man-(1-&gt;6)]-beta-D-Man-(1-&gt;4)-beta-D-GlcNAc-(1-&gt;4)-[alpha-L-Fuc-(1-&gt;6)]-beta-D-GlcNAc}-L-asparaginyl-[protein] + UDP-N-acetyl-alpha-D-glucosamine = N(4)-{beta-D-GlcNAc-(1-&gt;2)-[beta-D-GlcNAc-(1-&gt;4)]-alpha-D-Man-(1-&gt;3)-[beta-D-GlcNAc-(1-&gt;2)-alpha-D-Man-(1-&gt;6)]-beta-D-Man-(1-&gt;4)-beta-D-GlcNAc-(1-&gt;4)-[alpha-L-Fuc-(1-&gt;6)]-beta-D-GlcNAc}-asparaginyl-[protein] + UDP + H(+). The catalysed reaction is an N(4)-{beta-D-GlcNAc-(1-&gt;2)-alpha-D-Man-(1-&gt;3)-[beta-D-Gal-(1-&gt;4)-beta-D-GlcNAc-(1-&gt;2)-alpha-D-Man-(1-&gt;6)]-beta-D-Man-(1-&gt;4)-beta-D-GlcNAc-(1-&gt;4)-beta-D-GlcNAc}-L-asparaginyl-[protein] + UDP-N-acetyl-alpha-D-glucosamine = an N(4)-{beta-D-GlcNAc-(1-&gt;2)-[beta-D-GlcNAc-(1-&gt;4)]-alpha-D-Man-(1-&gt;3)-[beta-D-Gal-(1-&gt;4)-beta-D-GlcNAc-(1-&gt;2)-alpha-D-Man-(1-&gt;6)]-beta-D-Man-(1-&gt;4)-beta-D-GlcNAc-(1-&gt;4)-beta-D-GlcNAc}-L-asparaginyl-[protein] + UDP + H(+). It catalyses the reaction N(4)-{beta-D-GlcNAc-(1-&gt;2)-alpha-D-Man-(1-&gt;3)-[alpha-D-Man-(1-&gt;3)-{alpha-D-Man-(1-&gt;6)}-alpha-D-Man-(1-&gt;6)]-beta-D-Man-(1-&gt;4)-beta-D-GlcNAc-(1-&gt;4)-beta-D-GlcNAc}-asparaginyl-[protein] + UDP-N-acetyl-alpha-D-glucosamine = N(4)-{beta-D-GlcNAc-(1-&gt;2)-[beta-D-GlcNAc-(1-&gt;4)]-alpha-D-Man-(1-&gt;3)-[alpha-D-Man-(1-&gt;3)-{alpha-D-Man-(1-&gt;6)}-alpha-D-Man-(1-&gt;6)]-beta-D-Man-(1-&gt;4)-beta-D-GlcNAc-(1-&gt;4)-beta-D-GlcNAc}-asparaginyl-[protein] + UDP + H(+). It carries out the reaction N(4)-{beta-D-GlcNAc-(1-&gt;2)-alpha-D-Man-(1-&gt;3)-beta-D-Man-(1-&gt;4)-beta-D-GlcNAc-(1-&gt;4)-beta-D-GlcNAc}-asparaginyl-[protein] + UDP-N-acetyl-alpha-D-glucosamine = N(4)-{beta-D-GlcNAc-(1-&gt;2)-[beta-D-GlcNAc-(1-&gt;4)]-alpha-D-Man-(1-&gt;3)-beta-D-Man-(1-&gt;4)-beta-D-GlcNAc-(1-&gt;4)-beta-D-GlcNAc}-asparaginyl-[protein] + UDP + H(+). Its pathway is protein modification; protein glycosylation. Glycosyltransferase that catalyze the transfer of GlcNAc from UDP-GlcNAc to the GlcNAcbeta1-2Manalpha1-3 arm of the core structure of N-linked glycans through a beta1-4 linkage and participates in the production of tri- and tetra-antennary N-linked sugar chains. Prefers complex-type N-glycans over hybrid-types. Has lower affinities for donors or acceptors than MGAT4A, suggesting that, under physiological conditions, it is not the main contributor in N-glycan biosynthesis. The polypeptide is Alpha-1,3-mannosyl-glycoprotein 4-beta-N-acetylglucosaminyltransferase B (mgat4bQ9UQ53) (Danio rerio (Zebrafish)).